The following is a 215-amino-acid chain: Glycerol-3-phosphate acyltransferase (215 aa).

The next 6 membrane-spanning stretches (helical) occupy residues L3–G23, T42–I61, T68–L90, A110–L130, L134–L154, and L162–I182.

It belongs to the PlsY family. In terms of assembly, probably interacts with PlsX.

The protein resides in the cell membrane. The enzyme catalyses an acyl phosphate + sn-glycerol 3-phosphate = a 1-acyl-sn-glycero-3-phosphate + phosphate. The protein operates within lipid metabolism; phospholipid metabolism. In terms of biological role, catalyzes the transfer of an acyl group from acyl-phosphate (acyl-PO(4)) to glycerol-3-phosphate (G3P) to form lysophosphatidic acid (LPA). This enzyme utilizes acyl-phosphate as fatty acyl donor, but not acyl-CoA or acyl-ACP. This Streptococcus equi subsp. zooepidemicus (strain MGCS10565) protein is Glycerol-3-phosphate acyltransferase.